The chain runs to 961 residues: DNA repair endonuclease XPF (961 aa).

Disordered stretches follow at residues 1 to 27 (MADS…SADT), 451 to 485 (NYAK…PPLA), and 674 to 693 (PTDE…QATK). Residues 13–22 (TENERPKEVE) are compositionally biased toward basic and acidic residues. A compositionally biased stretch (polar residues) spans 458–469 (TRSAPPKNVSSN). Residues 697–777 (KVIVDMREFR…KPILLIEFDQ (81 aa)) enclose the ERCC4 domain.

Belongs to the XPF family. In terms of assembly, heterodimer. Interacts with hdm.

The protein localises to the nucleus. Implicated in recombination events during meiosis, mostly in meiotic exchange. May directly resolve Holliday junctions within recombination intermediates leading to DNA exchange. Also required for the repair of mismatches within meiotic heteroduplex DNA and for nucleotide excision repair. This Drosophila melanogaster (Fruit fly) protein is DNA repair endonuclease XPF (mei-9).